The primary structure comprises 256 residues: METYVNKLHEGSTYTAAVQYNVLEKDDDPASLTIWVPMFQSSISADLLIKELINVNILVRQISTLKGPSLKIMINSRSAVLAQMPNKFTISANVSLDERSKLAYDITTPCEIKACSLTCLKVKNMLTTVKDLTMKTFNPTHEIIALCEFENIMTSKKVVIPTFLRSINVKAKDLDSLENIATTEFKNAITNAKIIPYAGLVLVITVTDNKGAFKYIKPQSQFIVDLGAYLEKESIYYVTTNWKHTATRFSIKPIED.

Belongs to the pneumovirinae M protein family. Forms dimers. Forms higher-order oligomers. Interacts with glycoprotein G (via N-terminus). Interacts with protein M2-1; this interaction directs the matrix protein localization to cytoplasmic inclusions comprising viral proteins L, N, P, and M2-1 and mediates the matrix protein association with the nucleocapsid.

The protein resides in the virion. The protein localises to the host cytoplasm. Its subcellular location is the host nucleus. It is found in the host cell membrane. In terms of biological role, plays a crucial role in virus assembly into filaments and budding. Early in infection, localizes in the nucleus where it may inhibit host cell transcription. Later in infection, traffics to the cytoplasm to associate with inclusion bodies, the site of viral transcription and replication. During virus assembly and budding, acts as a bridge between the nucleocapsid and the lipid bilayer. The polypeptide is Matrix protein (M) (Ovine respiratory syncytial virus (strain WSU 83-1578) (ORSV)).